The sequence spans 188 residues: UPF0200 protein M1627_1244 (188 aa).

15-22 is a binding site for ATP; that stretch reads GMPGSGKS.

It belongs to the UPF0200 family.

The polypeptide is UPF0200 protein M1627_1244 (Saccharolobus islandicus (strain M.16.27) (Sulfolobus islandicus)).